The primary structure comprises 201 residues: 3-isopropylmalate dehydratase small subunit (201 aa).

The protein belongs to the LeuD family. LeuD type 1 subfamily. In terms of assembly, heterodimer of LeuC and LeuD.

The enzyme catalyses (2R,3S)-3-isopropylmalate = (2S)-2-isopropylmalate. It participates in amino-acid biosynthesis; L-leucine biosynthesis; L-leucine from 3-methyl-2-oxobutanoate: step 2/4. Its function is as follows. Catalyzes the isomerization between 2-isopropylmalate and 3-isopropylmalate, via the formation of 2-isopropylmaleate. This Ruegeria sp. (strain TM1040) (Silicibacter sp.) protein is 3-isopropylmalate dehydratase small subunit.